The sequence spans 33 residues: Large ribosomal subunit protein eL21 (33 aa).

This sequence belongs to the eukaryotic ribosomal protein eL21 family. As to quaternary structure, component of the large ribosomal subunit.

Its subcellular location is the cytoplasm. The protein resides in the cytosol. It localises to the endoplasmic reticulum. Component of the large ribosomal subunit. The ribosome is a large ribonucleoprotein complex responsible for the synthesis of proteins in the cell. The chain is Large ribosomal subunit protein eL21 (rpl21) from Xenopus laevis (African clawed frog).